Here is a 325-residue protein sequence, read N- to C-terminus: GMP reductase (325 aa).

Residue C174 is the Thioimidate intermediate of the active site. Position 203-226 (203-226) interacts with NADP(+); sequence IVADGGIRNNGDIAKSIRFGASMC.

Belongs to the IMPDH/GMPR family. GuaC type 2 subfamily.

It carries out the reaction IMP + NH4(+) + NADP(+) = GMP + NADPH + 2 H(+). Catalyzes the irreversible NADPH-dependent deamination of GMP to IMP. It functions in the conversion of nucleobase, nucleoside and nucleotide derivatives of G to A nucleotides, and in maintaining the intracellular balance of A and G nucleotides. The protein is GMP reductase of Ligilactobacillus salivarius (strain UCC118) (Lactobacillus salivarius).